A 221-amino-acid polypeptide reads, in one-letter code: GTP-binding nuclear protein Ran-1 (221 aa).

One can recognise a Small GTPase Ran-type domain in the interval 10-174 (DYPSFKLVIV…LYLARKLAGD (165 aa)). 21 to 28 (DGGTGKTT) contributes to the GTP binding site. The switch-I stretch occupies residues 40 to 48 (KKYEPTIGV). GTP is bound by residues Gly-71, 125–128 (NKVD), and 153–155 (SAK). The segment at 71 to 87 (GQEKFGGLRDGYYIHGQ) is switch-II.

Belongs to the small GTPase superfamily. Ran family. As to quaternary structure, found in a nuclear export complex with RanGTP, exportin and pre-miRNA.

It is found in the nucleus. GTP-binding protein involved in nucleocytoplasmic transport. Required for the import of protein into the nucleus and also for RNA export. Involved in chromatin condensation and control of cell cycle. In Oryza sativa subsp. indica (Rice), this protein is GTP-binding nuclear protein Ran-1 (RAN1).